A 252-amino-acid polypeptide reads, in one-letter code: Ubiquinone biosynthesis O-methyltransferase (252 aa).

Positions 36, 60, 81, and 123 each coordinate S-adenosyl-L-methionine.

This sequence belongs to the methyltransferase superfamily. UbiG/COQ3 family.

The catalysed reaction is a 3-demethylubiquinol + S-adenosyl-L-methionine = a ubiquinol + S-adenosyl-L-homocysteine + H(+). It catalyses the reaction a 3-(all-trans-polyprenyl)benzene-1,2-diol + S-adenosyl-L-methionine = a 2-methoxy-6-(all-trans-polyprenyl)phenol + S-adenosyl-L-homocysteine + H(+). The protein operates within cofactor biosynthesis; ubiquinone biosynthesis. O-methyltransferase that catalyzes the 2 O-methylation steps in the ubiquinone biosynthetic pathway. The sequence is that of Ubiquinone biosynthesis O-methyltransferase from Rickettsia prowazekii (strain Madrid E).